We begin with the raw amino-acid sequence, 486 residues long: Galactose-1-phosphate uridylyltransferase (486 aa).

It belongs to the galactose-1-phosphate uridylyltransferase type 2 family.

Its subcellular location is the cytoplasm. It carries out the reaction alpha-D-galactose 1-phosphate + UDP-alpha-D-glucose = alpha-D-glucose 1-phosphate + UDP-alpha-D-galactose. It functions in the pathway carbohydrate metabolism; galactose metabolism. This Lacticaseibacillus paracasei (strain ATCC 334 / BCRC 17002 / CCUG 31169 / CIP 107868 / KCTC 3260 / NRRL B-441) (Lactobacillus paracasei) protein is Galactose-1-phosphate uridylyltransferase.